Consider the following 201-residue polypeptide: Peptide deformylase (201 aa).

The interval 1 to 21 is disordered; that stretch reads MANHFSQLAKKSRTNGNAEKI. Cysteine 121 and histidine 163 together coordinate Fe cation. Residue glutamate 164 is part of the active site. Histidine 167 serves as a coordination point for Fe cation.

The protein belongs to the polypeptide deformylase family. The cofactor is Fe(2+).

The enzyme catalyses N-terminal N-formyl-L-methionyl-[peptide] + H2O = N-terminal L-methionyl-[peptide] + formate. Removes the formyl group from the N-terminal Met of newly synthesized proteins. Requires at least a dipeptide for an efficient rate of reaction. N-terminal L-methionine is a prerequisite for activity but the enzyme has broad specificity at other positions. The protein is Peptide deformylase of Prochlorococcus marinus (strain AS9601).